The primary structure comprises 226 residues: MLLHIPHVLTREQVRACRARLDAADWADGRITAGSQSAQVKRNLQLPQSSPVAQELSAQVEQTLRQHPLFFSAALPKRFFPPLFNRYEGGMNFGNHVDNALRYLPGTTDAVRTDVSATLFLSDPDEYDGGELVVEDTYGVHSVKLPAGDIVVYPSTSLHRVEPVSRGARVASFMWIQSLVREDARRTLLFDMDMNIQRLRERHGDTEELVGLTSAYHNLLRLWAEV.

The Fe2OG dioxygenase domain occupies 78-178 (RFFPPLFNRY…RVASFMWIQS (101 aa)). Positions 96, 98, and 159 each coordinate Fe cation. Arg-169 serves as a coordination point for 2-oxoglutarate.

It depends on Fe(2+) as a cofactor. L-ascorbate is required as a cofactor.

The polypeptide is PKHD-type hydroxylase LHK_00496 (Laribacter hongkongensis (strain HLHK9)).